The chain runs to 555 residues: Glutamine--tRNA ligase (555 aa).

A 'HIGH' region motif is present at residues 34–44 (PEPNGYLHIGH). ATP is bound by residues 35–37 (EPN) and 41–47 (HIGHAKS). The L-glutamine site is built by Asp-67 and Tyr-212. ATP-binding positions include Thr-231, 261–262 (RL), and 269–271 (MSK). Positions 268–272 (VMSKR) match the 'KMSKS' region motif. The tract at residues 317 to 324 (TKQDNTIE) is interaction with tRNA.

Belongs to the class-I aminoacyl-tRNA synthetase family. As to quaternary structure, monomer.

Its subcellular location is the cytoplasm. The catalysed reaction is tRNA(Gln) + L-glutamine + ATP = L-glutaminyl-tRNA(Gln) + AMP + diphosphate. This Citrobacter koseri (strain ATCC BAA-895 / CDC 4225-83 / SGSC4696) protein is Glutamine--tRNA ligase.